We begin with the raw amino-acid sequence, 368 residues long: Flagellar P-ring protein (368 aa).

A signal peptide spans Met1 to Ala24.

This sequence belongs to the FlgI family. The basal body constitutes a major portion of the flagellar organelle and consists of four rings (L,P,S, and M) mounted on a central rod.

It localises to the periplasm. Its subcellular location is the bacterial flagellum basal body. Assembles around the rod to form the L-ring and probably protects the motor/basal body from shearing forces during rotation. The protein is Flagellar P-ring protein of Methylobacillus flagellatus (strain ATCC 51484 / DSM 6875 / VKM B-1610 / KT).